We begin with the raw amino-acid sequence, 235 residues long: Large ribosomal subunit protein uL3 (235 aa).

The segment at 138 to 157 (SVSHRSHGSTGGRQDPGKTF) is disordered. At glutamine 151 the chain carries N5-methylglutamine.

It belongs to the universal ribosomal protein uL3 family. Part of the 50S ribosomal subunit. Forms a cluster with proteins L14 and L19. Post-translationally, methylated by PrmB.

In terms of biological role, one of the primary rRNA binding proteins, it binds directly near the 3'-end of the 23S rRNA, where it nucleates assembly of the 50S subunit. This is Large ribosomal subunit protein uL3 from Rhodospirillum centenum (strain ATCC 51521 / SW).